The chain runs to 215 residues: BAG family molecular chaperone regulator 5, mitochondrial (215 aa).

The transit peptide at 1–14 directs the protein to the mitochondrion; sequence MKRSRKFSSSTTTT. One can recognise an IQ domain in the interval 50–79; the sequence is ATAAAARIQSGYRSYRIRNLYKKISSINRE. The BAG domain maps to 72 to 149; the sequence is KISSINREAN…GMQEILDSIS (78 aa).

In terms of assembly, binds to the ATPase domain of HSP70/HSC70 chaperones. Interacts with HSP70-1.

The protein localises to the mitochondrion. Functionally, co-chaperone that regulates diverse cellular pathways, such as programmed cell death and stress responses. This is BAG family molecular chaperone regulator 5, mitochondrial (BAG5) from Arabidopsis thaliana (Mouse-ear cress).